A 314-amino-acid polypeptide reads, in one-letter code: Ketimine reductase mu-crystallin (314 aa).

Residue Arg-47 participates in 3,3',5-triiodo-L-thyronine binding. 12 residues coordinate NADPH: Ser-91, His-92, Arg-119, Ala-144, Val-146, Gln-147, Asn-168, Arg-169, Thr-170, Asn-173, Thr-205, and Met-206. Position 257 (Glu-257) interacts with 3,3',5-triiodo-L-thyronine. An NADPH-binding site is contributed by Ser-292.

This sequence belongs to the ornithine cyclodeaminase/mu-crystallin family. Homodimer. Binds the thyroid hormone triiodothyronine (T3); T3 binding inhibits enzymatic activity.

The protein resides in the cytoplasm. It catalyses the reaction L-pipecolate + NAD(+) = Delta(1)-piperideine-2-carboxylate + NADH + H(+). It carries out the reaction L-pipecolate + NADP(+) = Delta(1)-piperideine-2-carboxylate + NADPH + H(+). The catalysed reaction is L-proline + NADP(+) = 1-pyrroline-2-carboxylate + NADPH + H(+). The enzyme catalyses L-proline + NAD(+) = 1-pyrroline-2-carboxylate + NADH + H(+). It catalyses the reaction (3R)-1,4-thiomorpholine-3-carboxylate + NAD(+) = 3,4-dehydrothiomorpholine-3-carboxylate + NADH + 2 H(+). It carries out the reaction (3R)-1,4-thiomorpholine-3-carboxylate + NADP(+) = 3,4-dehydrothiomorpholine-3-carboxylate + NADPH + 2 H(+). The catalysed reaction is (S)-cystathionine ketimine + NADH + 2 H(+) = (3R,5S)-2,3,5,6,7-pentahydro-1,4-thiazepine-3,5-dicarboxylate + NAD(+). The enzyme catalyses (S)-cystathionine ketimine + NADPH + 2 H(+) = (3R,5S)-2,3,5,6,7-pentahydro-1,4-thiazepine-3,5-dicarboxylate + NADP(+). It catalyses the reaction (R)-lanthionine ketimine + NADPH + 2 H(+) = (3R,5R)-1,4-thiomorpholine-3,5-dicarboxylate + NADP(+). It carries out the reaction Delta(2)-thiazoline-2-carboxylate + NADPH + 2 H(+) = L-thiazolidine-2-carboxylate + NADP(+). Functionally, catalyzes the NAD(P)H-dependent reduction of imine double bonds of a number of cyclic ketimine substrates, including sulfur-containing cyclic ketimines. Under physiological conditions, it efficiently catalyzes delta(1)-piperideine-2-carboxylate (P2C) and delta(1)-pyrroline-2-carboxylate (Pyr2C) reduction, suggesting a central role in lysine and glutamate metabolism. Additional substrates are (S)-cystathionine ketimine (CysK), 3,4-dehydrothiomorpholine-3-carboxylate (AECK), and (R)-lanthionine ketimine (LK) that is reduced at very low rate compared to other substrates. Also catalyzes the NAD(P)H-dependent reduction of delta(2)-thiazoline-2-carboxylate (T2C). The chain is Ketimine reductase mu-crystallin (CRYM) from Bos taurus (Bovine).